Here is a 506-residue protein sequence, read N- to C-terminus: Mitogen-activated protein kinase 13 (506 aa).

A Protein kinase domain is found at 13–304; it reads YQIQEVVGKG…AEEALADPYF (292 aa). Residues 19 to 27 and Lys42 each bind ATP; that span reads VGKGSYGVV. The active-site Proton acceptor is Asp139. The residue at position 175 (Thr175) is a Phosphothreonine. The short motif at 175–177 is the TXY element; that stretch reads TDY. Tyr177 carries the phosphotyrosine modification. Residues 384–421 are disordered; that stretch reads YSRGERSTPLRRQHASLPRERVCSSVDSNNQDSDNEER.

It belongs to the protein kinase superfamily. CMGC Ser/Thr protein kinase family. MAP kinase subfamily. Dually phosphorylated on Thr-175 and Tyr-177, which activates the enzyme.

The catalysed reaction is L-seryl-[protein] + ATP = O-phospho-L-seryl-[protein] + ADP + H(+). It catalyses the reaction L-threonyl-[protein] + ATP = O-phospho-L-threonyl-[protein] + ADP + H(+). With respect to regulation, activated by threonine and tyrosine phosphorylation. The chain is Mitogen-activated protein kinase 13 (MPK13) from Oryza sativa subsp. indica (Rice).